The chain runs to 350 residues: Lipase chaperone (350 aa).

The chain crosses the membrane as a helical span at residues 12 to 32 (IVLYLILGCVVVCGVWYSFDV).

The protein belongs to the lipase chaperone family.

The protein resides in the cell inner membrane. Its function is as follows. May be involved in the folding of the extracellular lipase during its passage through the periplasm. This is Lipase chaperone (lifO) from Xylella fastidiosa (strain 9a5c).